Here is a 331-residue protein sequence, read N- to C-terminus: Putative ankyrin repeat protein RBE_0261 (331 aa).

An ANK repeat occupies 94 to 159 (QGENVIHKCV…KAKNTLLNIV (66 aa)).

The chain is Putative ankyrin repeat protein RBE_0261 from Rickettsia bellii (strain RML369-C).